We begin with the raw amino-acid sequence, 419 residues long: Transcription factor IIIB 50 kDa subunit (419 aa).

A TFIIB-type zinc finger spans residues 2 to 36; it reads PGRGRCPDCGSTELVEDSHYSQSQLVCSDCGCVVT. Zn(2+) contacts are provided by Cys-7, Cys-10, Cys-28, and Cys-31. Tandem repeats lie at residues 72–157 and 173–249. The segment at 108 to 114 is interaction with target DNA; the sequence is AARLQKK. The segment covering 314–326 has biased composition (basic and acidic residues); sequence DGTAEVETREKEP. The interval 314 to 351 is disordered; it reads DGTAEVETREKEPPGWGQGQGEGEVGNNSLGLPQGKRP. Residue Ser-353 is modified to Phosphoserine. A required for the formation of a ternary complex with DNA and TBP; not required for interaction with TBP in the absence of DNA region spans residues 357 to 363; that stretch reads LLPPCML. A Cysteine sulfenic acid (-SOH) modification is found at Cys-361. Residues 365 to 419 are required for interaction with TBP and formation of a ternary complex with DNA and TBP; it reads SPKRICPVPPVSTVTGDENISDSEIEQYLRTPQEVRDFQRAQAARQAATSVPNPP.

This sequence belongs to the TFIIB family. As to quaternary structure, component of TFIIIB complexes. The TFIIIB complex has two activities, alpha and beta. The TFIIIB-alpha activity complex is composed of TBP, BDP1, and a complex containing both BRF2 and at least four stably associated proteins; this complex inhibits the transcription by pol III via its phosphorylation by CK2; YY1 facilitates the TFIIIB-alpha complex formation. Interacts with TBP; this interaction promotes recruitment of BRF2 to TATA box-containing promoters. Interacts with TBP and the BURE sequence (GC-rich sequence downstream from the TATA box) to form a strong ternary complex which is joined by BDP1; this ternary complex stimulates pol III transcription. Forms a trimeric complex composed of TBP, BRF2 and mini-SNAPc complex (SNAP43, SNAP50, and the N-terminal third of SNAP190) on the promoter. Assembly of the TBP-BRF2 complex is stimulated by SNAP190. Interacts with MAF1 and SNAPC4. In terms of processing, in response to oxidative stress, Cys-361 is reversibly oxidized to cysteine sulfenic acid. Oxidation of Cys-361 impairs formation of a ternary complex with TBP and DNA and down-regulates expression of target genes in response to oxidative stress.

It is found in the nucleus. Its function is as follows. General activator of RNA polymerase III transcription. Factor exclusively required for RNA polymerase III transcription of genes with promoter elements upstream of the initiation sites. Contributes to the regulation of gene expression; functions as activator in the absence of oxidative stress. Down-regulates expression of target genes in response to oxidative stress. Overexpression protects cells against apoptosis in response to oxidative stress. The polypeptide is Transcription factor IIIB 50 kDa subunit (BRF2) (Homo sapiens (Human)).